Consider the following 113-residue polypeptide: Iron-sulfur cluster insertion protein ErpA (113 aa).

Iron-sulfur cluster-binding residues include Cys41, Cys105, and Cys107.

The protein belongs to the HesB/IscA family. In terms of assembly, homodimer. The cofactor is iron-sulfur cluster.

Its function is as follows. Required for insertion of 4Fe-4S clusters for at least IspG. This chain is Iron-sulfur cluster insertion protein ErpA, found in Actinobacillus pleuropneumoniae serotype 3 (strain JL03).